The primary structure comprises 104 residues: Replication restart protein PriB (104 aa).

One can recognise an SSB domain in the interval 1-101 (MTNRLELSGV…LHADHIEIIC (101 aa)).

The protein belongs to the PriB family. As to quaternary structure, homodimer. Interacts with PriA and DnaT. Component of the replication restart primosome. Primosome assembly occurs via a 'hand-off' mechanism. PriA binds to replication forks, subsequently PriB then DnaT bind; DnaT then displaces ssDNA to generate the helicase loading substrate.

Its function is as follows. Involved in the restart of stalled replication forks, which reloads the replicative helicase on sites other than the origin of replication; the PriA-PriB pathway is the major replication restart pathway. During primosome assembly it facilitates complex formation between PriA and DnaT on DNA; stabilizes PriA on DNA. Stimulates the DNA unwinding activity of PriA helicase. This is Replication restart protein PriB from Photobacterium profundum (strain SS9).